Consider the following 396-residue polypeptide: Aspartate aminotransferase (396 aa).

Positions 34, 130, and 183 each coordinate L-aspartate. K246 carries the N6-(pyridoxal phosphate)lysine modification. L-aspartate is bound at residue R374.

Belongs to the class-I pyridoxal-phosphate-dependent aminotransferase family. In terms of assembly, homodimer. Pyridoxal 5'-phosphate serves as cofactor.

The protein localises to the cytoplasm. The catalysed reaction is L-aspartate + 2-oxoglutarate = oxaloacetate + L-glutamate. This is Aspartate aminotransferase (aspC) from Haemophilus influenzae (strain ATCC 51907 / DSM 11121 / KW20 / Rd).